We begin with the raw amino-acid sequence, 417 residues long: UDP-N-acetylglucosamine 1-carboxyvinyltransferase (417 aa).

22 to 23 (KN) is a phosphoenolpyruvate binding site. R91 contributes to the UDP-N-acetyl-alpha-D-glucosamine binding site. C115 (proton donor) is an active-site residue. C115 carries the 2-(S-cysteinyl)pyruvic acid O-phosphothioketal modification. UDP-N-acetyl-alpha-D-glucosamine-binding positions include 120–124 (RPVDL), D304, and I326.

This sequence belongs to the EPSP synthase family. MurA subfamily.

The protein localises to the cytoplasm. The enzyme catalyses phosphoenolpyruvate + UDP-N-acetyl-alpha-D-glucosamine = UDP-N-acetyl-3-O-(1-carboxyvinyl)-alpha-D-glucosamine + phosphate. It participates in cell wall biogenesis; peptidoglycan biosynthesis. Cell wall formation. Adds enolpyruvyl to UDP-N-acetylglucosamine. This is UDP-N-acetylglucosamine 1-carboxyvinyltransferase from Nitratidesulfovibrio vulgaris (strain DP4) (Desulfovibrio vulgaris).